A 165-amino-acid polypeptide reads, in one-letter code: UPF0303 protein BTH_I2506 (165 aa).

It belongs to the UPF0303 family.

This chain is UPF0303 protein BTH_I2506, found in Burkholderia thailandensis (strain ATCC 700388 / DSM 13276 / CCUG 48851 / CIP 106301 / E264).